Here is a 481-residue protein sequence, read N- to C-terminus: 2-succinylbenzoate--CoA ligase (481 aa).

This sequence belongs to the ATP-dependent AMP-binding enzyme family. MenE subfamily.

The enzyme catalyses 2-succinylbenzoate + ATP + CoA = 2-succinylbenzoyl-CoA + AMP + diphosphate. Its pathway is quinol/quinone metabolism; 1,4-dihydroxy-2-naphthoate biosynthesis; 1,4-dihydroxy-2-naphthoate from chorismate: step 5/7. It functions in the pathway quinol/quinone metabolism; menaquinone biosynthesis. Its function is as follows. Converts 2-succinylbenzoate (OSB) to 2-succinylbenzoyl-CoA (OSB-CoA). This is 2-succinylbenzoate--CoA ligase from Bacillus cytotoxicus (strain DSM 22905 / CIP 110041 / 391-98 / NVH 391-98).